We begin with the raw amino-acid sequence, 138 residues long: Large ribosomal subunit protein uL16 (138 aa).

Residues 1–13 are compositionally biased toward basic residues; the sequence is MLQPARRKYRKEQ. Residues 1 to 22 form a disordered region; it reads MLQPARRKYRKEQKGRNTGVAT.

This sequence belongs to the universal ribosomal protein uL16 family. Part of the 50S ribosomal subunit.

In terms of biological role, binds 23S rRNA and is also seen to make contacts with the A and possibly P site tRNAs. The chain is Large ribosomal subunit protein uL16 from Polaromonas sp. (strain JS666 / ATCC BAA-500).